Consider the following 414-residue polypeptide: MTQANLSETLFKPRFKHPETSTLVRRFNHGAQPPVQSALDGKTIPHWYRMINRLMWIWRGIDPREILDVQARIVMSDAERTDDDLYDTVIGYRGGNWIYEWATQAMVWQQKACAEDDPQLSGRHWLHAATLYNIAAYPHLKGDDLAEQAQALSNRAYEEAAQRLPGTMRQMEFTVPGGAPITGFLHMPKGDGPFPTVLMCGGLDAMQTDYYSLYERYFAPRGIAMLTIDMPSVGFSSKWKLTQDSSLLHQHVLKALPNVPWVDHTRVAAFGFRFGANVAVRLAYLESPRLKAVACLGPVVHTLLSDFKCQQQVPEMYLDVLASRLGMHDASDEALRVELNRYSLKVQGLLGRRCPTPMLSGYWKNDPFSPEEDSRLITSSSADGKLLEIPFNPVYRNFDKGLQEITDWIEKRLC.

This sequence belongs to the FrsA family.

It catalyses the reaction a carboxylic ester + H2O = an alcohol + a carboxylate + H(+). Catalyzes the hydrolysis of esters. In Escherichia coli (strain K12 / DH10B), this protein is Esterase FrsA.